We begin with the raw amino-acid sequence, 210 residues long: Thymidylate kinase (210 aa).

Position 10–17 (10–17 (GLEGAGKS)) interacts with ATP.

This sequence belongs to the thymidylate kinase family.

The enzyme catalyses dTMP + ATP = dTDP + ADP. In terms of biological role, phosphorylation of dTMP to form dTDP in both de novo and salvage pathways of dTTP synthesis. This chain is Thymidylate kinase, found in Haemophilus influenzae (strain PittEE).